Consider the following 326-residue polypeptide: Melanocortin receptor 4 (326 aa).

Basic residues predominate over residues 1-14 (MNTSHHHGLHHSFR). Residues 1–31 (MNTSHHHGLHHSFRNHSQGALPVGKPSHGDR) are disordered. At 1-46 (MNTSHHHGLHHSFRNHSQGALPVGKPSHGDRGSASGCYEQLLISTE) the chain is on the extracellular side. Residues N2 and N15 are each glycosylated (N-linked (GlcNAc...) asparagine). The chain crosses the membrane as a helical span at residues 47–67 (IFLTLGLVSLLENILVIAAIV). Residues 68–71 (KNKN) lie on the Cytoplasmic side of the membrane. A helical membrane pass occupies residues 72–92 (LHSPMYFFICSLAVADLLVSV). Residues 93–121 (SNASETVVMALITGGNLTNRESIIKNMDN) lie on the Extracellular side of the membrane. N94 and N108 each carry an N-linked (GlcNAc...) asparagine glycan. A helical membrane pass occupies residues 122–142 (VFDSMICSSLLASIWSLLAIA). Over 143–163 (VDRYITIFYALRYHNIMTQRR) the chain is Cytoplasmic. Residues 164 to 184 (AGTIITCIWTFCTVSGVLFIV) traverse the membrane as a helical segment. The Extracellular segment spans residues 185–190 (YSESTT). The chain crosses the membrane as a helical span at residues 191-211 (VLICLISMFFTMLALMASLYV). Topologically, residues 212–246 (HMFLLARLHMKRIAALPGNGPIWQAANMKGAITIT) are cytoplasmic. A helical membrane pass occupies residues 247–267 (ILLGVFVVCWAPFFLHLILMI). Over 268-281 (SCPRNPYCVCFMSH) the chain is Extracellular. Residues 282-302 (FNMYLILIMCNSVIDPLIYAF) traverse the membrane as a helical segment. The Cytoplasmic segment spans residues 303 to 326 (RSQEMRKTFKEICCCWYGLASLCV). A lipid anchor (S-palmitoyl cysteine) is attached at C316.

Belongs to the G-protein coupled receptor 1 family. Homodimer; disulfide-linked, also forms higher order oligomers. Interacts with mrap2a; decreasing ligand-sensitivity. Interacts with mrap2b; increasing ligand-sensitivity and generation of cAMP.

The protein resides in the cell membrane. Receptor specific to the heptapeptide core common to adrenocorticotropic hormone and alpha-, beta-, and gamma-MSH. Plays a central role in energy homeostasis and somatic growth. This receptor is mediated by G proteins that stimulate adenylate cyclase (cAMP). The protein is Melanocortin receptor 4 (mc4r) of Danio rerio (Zebrafish).